Here is a 396-residue protein sequence, read N- to C-terminus: Lipid-A-disaccharide synthase (396 aa).

It belongs to the LpxB family.

The catalysed reaction is a lipid X + a UDP-2-N,3-O-bis[(3R)-3-hydroxyacyl]-alpha-D-glucosamine = a lipid A disaccharide + UDP + H(+). Its pathway is bacterial outer membrane biogenesis; LPS lipid A biosynthesis. Condensation of UDP-2,3-diacylglucosamine and 2,3-diacylglucosamine-1-phosphate to form lipid A disaccharide, a precursor of lipid A, a phosphorylated glycolipid that anchors the lipopolysaccharide to the outer membrane of the cell. The protein is Lipid-A-disaccharide synthase of Acinetobacter baylyi (strain ATCC 33305 / BD413 / ADP1).